We begin with the raw amino-acid sequence, 508 residues long: GMP synthase [glutamine-hydrolyzing] (508 aa).

In terms of domain architecture, Glutamine amidotransferase type-1 spans 1–189; sequence MILVLDFGSQ…ALLVCGCEKT (189 aa). C78 acts as the Nucleophile in catalysis. Residues H163 and E165 contribute to the active site. The region spanning 190–383 is the GMPS ATP-PPase domain; sequence WGMQHFAQRE…LGVSQDFLMR (194 aa). Residue 217 to 223 participates in ATP binding; that stretch reads SGGVDST.

As to quaternary structure, homodimer.

It catalyses the reaction XMP + L-glutamine + ATP + H2O = GMP + L-glutamate + AMP + diphosphate + 2 H(+). Its pathway is purine metabolism; GMP biosynthesis; GMP from XMP (L-Gln route): step 1/1. Its function is as follows. Catalyzes the synthesis of GMP from XMP. The protein is GMP synthase [glutamine-hydrolyzing] (guaA) of Helicobacter pylori (strain J99 / ATCC 700824) (Campylobacter pylori J99).